A 338-amino-acid polypeptide reads, in one-letter code: Glycerol-3-phosphate dehydrogenase [NAD(P)+] (338 aa).

Positions 20 and 110 each coordinate NADPH. The sn-glycerol 3-phosphate site is built by Lys110, Gly141, and Ser143. An NADPH-binding site is contributed by Ala145. Positions 197, 250, 260, 261, and 262 each coordinate sn-glycerol 3-phosphate. The Proton acceptor role is filled by Lys197. Residue Arg261 participates in NADPH binding. NADPH is bound at residue Glu287.

This sequence belongs to the NAD-dependent glycerol-3-phosphate dehydrogenase family.

The protein resides in the cytoplasm. The enzyme catalyses sn-glycerol 3-phosphate + NAD(+) = dihydroxyacetone phosphate + NADH + H(+). It carries out the reaction sn-glycerol 3-phosphate + NADP(+) = dihydroxyacetone phosphate + NADPH + H(+). Its pathway is membrane lipid metabolism; glycerophospholipid metabolism. Its function is as follows. Catalyzes the reduction of the glycolytic intermediate dihydroxyacetone phosphate (DHAP) to sn-glycerol 3-phosphate (G3P), the key precursor for phospholipid synthesis. This is Glycerol-3-phosphate dehydrogenase [NAD(P)+] from Aster yellows witches'-broom phytoplasma (strain AYWB).